We begin with the raw amino-acid sequence, 170 residues long: Group 2 truncated hemoglobin 3-1 (170 aa).

A heme b-binding site is contributed by histidine 98.

Belongs to the truncated hemoglobin family. Group II subfamily. In terms of assembly, homodimer when ferric.

In terms of biological role, hemoglobin-like protein that exhibits an unusual concentration-independent binding of O(2) and CO. Required for general plant development and during nodulation. May promote shoot organogenesis from root explants. This is Group 2 truncated hemoglobin 3-1 from Medicago truncatula (Barrel medic).